The following is a 190-amino-acid chain: UPF0301 protein TC_0483 (190 aa).

This sequence belongs to the UPF0301 (AlgH) family.

The sequence is that of UPF0301 protein TC_0483 from Chlamydia muridarum (strain MoPn / Nigg).